We begin with the raw amino-acid sequence, 623 residues long: NADPH-dependent diflavin oxidoreductase 1 (623 aa).

The Flavodoxin-like domain maps to 7-168 (IVILYGSETG…VYFEYEKKVL (162 aa)). Residues 13–18 (SETGNA), 60–63 (STTG), 106–115 (LGDSSYPKFN), and aspartate 142 each bind FMN. One can recognise an FAD-binding FR-type domain in the interval 224-491 (ESLKVGRVNI…VGPGVGLAPL (268 aa)). Residues arginine 383, 413–416 (RYYS), and 445–448 (GICT) each bind FAD. NADP(+) is bound at residue 538–539 (SR). FAD is bound at residue tryptophan 623.

The protein belongs to the NADPH-dependent diflavin oxidoreductase NDOR1 family. In the N-terminal section; belongs to the flavodoxin family. It in the C-terminal section; belongs to the flavoprotein pyridine nucleotide cytochrome reductase family. As to quaternary structure, interacts with DRE2; as part of the cytosolic iron-sulfur (Fe-S) protein assembly (CIA) machinery. Requires FAD as cofactor. FMN serves as cofactor.

Its subcellular location is the cytoplasm. The protein resides in the mitochondrion. The enzyme catalyses 2 oxidized [2Fe-2S]-[protein] + NADPH = 2 reduced [2Fe-2S]-[protein] + NADP(+) + H(+). In terms of biological role, NADPH-dependent reductase which is a central component of the cytosolic iron-sulfur (Fe-S) protein assembly (CIA) machinery. Transfers electrons from NADPH via its FAD and FMN prosthetic groups to the [2Fe-2S] cluster of DRE2, another key component of the CIA machinery. In turn, this reduced cluster provides electrons for assembly of cytosolic iron-sulfur cluster proteins. Positively controls H(2)O(2)-induced cell death. The sequence is that of NADPH-dependent diflavin oxidoreductase 1 from Saccharomyces cerevisiae (strain ATCC 204508 / S288c) (Baker's yeast).